We begin with the raw amino-acid sequence, 515 residues long: Hopanoid C-3 methylase (515 aa).

The B12-binding domain occupies 8-141 (PSPLMYTKVF…ETLARRGNID (134 aa)). Residues 181–395 (GTLDPCASIE…DIQHAVLPTR (215 aa)) enclose the Radical SAM core domain. Cys-195, Cys-199, and Cys-202 together coordinate [4Fe-4S] cluster.

This sequence belongs to the radical SAM superfamily. Requires [4Fe-4S] cluster as cofactor.

Its function is as follows. Required for methylation of hopanoids at the C-3 position. In Methylococcus capsulatus (strain ATCC 33009 / NCIMB 11132 / Bath), this protein is Hopanoid C-3 methylase.